We begin with the raw amino-acid sequence, 299 residues long: Hemolysin C homolog (299 aa).

2 consecutive CBS domains span residues 80 to 142 (MVPR…NGRL) and 145 to 202 (LIRK…IDDE).

The protein belongs to the UPF0053 family. Hemolysin C subfamily.

The chain is Hemolysin C homolog (tlyC) from Rickettsia massiliae (strain Mtu5).